The sequence spans 358 residues: UPF0725 protein At4g29550 (358 aa).

The segment at 31 to 82 (LNKHPPSGSGWTDEDDDNDDVFSSSFISKEELSDAVHNDPPSGWTDEDDDDQ) is disordered. The segment covering 58–67 (SKEELSDAVH) has biased composition (basic and acidic residues).

The protein belongs to the UPF0725 (EMB2204) family.

The protein is UPF0725 protein At4g29550 of Arabidopsis thaliana (Mouse-ear cress).